Here is an 887-residue protein sequence, read N- to C-terminus: Microsomal triglyceride transfer protein large subunit (887 aa).

Positions 1-11 (FLCFISSYSAS) are cleaved as a signal peptide. One can recognise a Vitellogenin domain in the interval 21 to 655 (LNNDRLYKLT…YIEKTPLHGI (635 aa)). A disulfide bridge links Cys167 with Cys187.

As to quaternary structure, heterodimer; heterodimerizes with the protein disulfide isomerase (P4HB/PDI). Interacts with APOB. Interacts with PRAP1.

The protein resides in the endoplasmic reticulum. It is found in the golgi apparatus. It carries out the reaction a 1,2-diacyl-sn-glycero-3-phosphocholine(in) = a 1,2-diacyl-sn-glycero-3-phosphocholine(out). It catalyses the reaction a 1,2-diacyl-sn-glycero-3-phosphoethanolamine(in) = a 1,2-diacyl-sn-glycero-3-phosphoethanolamine(out). The catalysed reaction is a cholesterol ester(in) = a cholesterol ester(out). The enzyme catalyses a triacyl-sn-glycerol(in) = a triacyl-sn-glycerol(out). Catalyzes the transport of triglyceride, cholesteryl ester, and phospholipid between phospholipid surfaces. Required for the assembly and secretion of plasma lipoproteins that contain apolipoprotein B. May be involved in regulating cholesteryl ester biosynthesis in cells that produce lipoproteins. This is Microsomal triglyceride transfer protein large subunit (MTTP) from Bos taurus (Bovine).